A 1015-amino-acid chain; its full sequence is DNA polymerase catalytic subunit (1015 aa).

This sequence belongs to the DNA polymerase type-B family. Forms a complex with the major DNA-binding protein BALF2, the DNA polymerase processivity factor BMRF1, and the alkaline exonuclease BGLF5. Interacts with the putative helicase-primase complex composed of BBLF4, BSLF1 and BBLF2/3 proteins; these interactions may coordinate leading and lagging strand DNA synthesis at the replication fork.

It localises to the host nucleus. The catalysed reaction is DNA(n) + a 2'-deoxyribonucleoside 5'-triphosphate = DNA(n+1) + diphosphate. In terms of biological role, replicates viral genomic DNA in the late phase of lytic infection, producing long concatemeric DNA. The replication complex is composed of six viral proteins: the DNA polymerase, processivity factor, primase, primase-associated factor, helicase, and ssDNA-binding protein. This is DNA polymerase catalytic subunit from Homo sapiens (Human).